The chain runs to 473 residues: Argininosuccinate lyase (473 aa).

It belongs to the lyase 1 family. Argininosuccinate lyase subfamily.

Its subcellular location is the cytoplasm. The catalysed reaction is 2-(N(omega)-L-arginino)succinate = fumarate + L-arginine. Its pathway is amino-acid biosynthesis; L-arginine biosynthesis; L-arginine from L-ornithine and carbamoyl phosphate: step 3/3. The protein is Argininosuccinate lyase of Nocardia farcinica (strain IFM 10152).